Here is a 126-residue protein sequence, read N- to C-terminus: MAGGKCIALIAHDQKKDAMAEFARRNQDVLADWHIVATGTTGGRVLDACPDLKVTRLKSGPLGGDQQIGAMIATGDIDMLIFFIDPLTPMPHDVDVKALTRLAVLYDIPMALNEATAERLIKTLNH.

An MGS-like domain is found at 1–126 (MAGGKCIALI…AERLIKTLNH (126 aa)). Residues H12, K16, 38-41 (TGTT), and 59-60 (SG) contribute to the substrate site. The Proton donor/acceptor role is filled by D65. H92 provides a ligand contact to substrate.

This sequence belongs to the methylglyoxal synthase family.

It carries out the reaction dihydroxyacetone phosphate = methylglyoxal + phosphate. Functionally, catalyzes the formation of methylglyoxal from dihydroxyacetone phosphate. This Rhizobium rhizogenes (strain K84 / ATCC BAA-868) (Agrobacterium radiobacter) protein is Methylglyoxal synthase.